The primary structure comprises 167 residues: Beta-3 adrenergic receptor (167 aa).

The Extracellular segment spans residues 1 to 25 (RVGADAEAQECHSNPRCCSFASNMP). The cysteines at positions 11 and 17 are disulfide-linked. Residues 26–47 (YALLSSSVSFYLPLLVMLFVYA) traverse the membrane as a helical segment. Over 48-114 (RVFVVAKRQR…LPLREHRALR (67 aa)) the chain is Cytoplasmic. The interval 66-97 (RFPPEESPRSPSRSPSPVAGGTGEAPDGVPSC) is disordered. Residues 115–136 (TLGLIMGIFSLCWLPFFLANVL) traverse the membrane as a helical segment. Topologically, residues 137 to 148 (RALAGPSIVPNG) are extracellular. Residues 149–167 (VFIALNWLGYANSAFNPLI) form a helical membrane-spanning segment.

The protein belongs to the G-protein coupled receptor 1 family. Adrenergic receptor subfamily. ADRB3 sub-subfamily. As to quaternary structure, interacts with ARRDC3.

Its subcellular location is the cell membrane. Beta-adrenergic receptors mediate the catecholamine-induced activation of adenylate cyclase through the action of G proteins. Beta-3 is involved in the regulation of lipolysis and thermogenesis. This chain is Beta-3 adrenergic receptor (ADRB3), found in Meriones unguiculatus (Mongolian jird).